The chain runs to 239 residues: Acidic leucine-rich nuclear phosphoprotein 32 family member B (239 aa).

LRR repeat units follow at residues 16 to 40 (AADA…LTSE), 43 to 64 (SLEF…PKLP), 65 to 87 (KLKK…AERT), and 89 to 110 (NLTH…EPLK). The LRRCT domain occupies 123–165 (CEVTMLNNYRESVFELLPKLTFLDGFDADDQEAPDSDPEAEDL). The segment covering 149-215 (DADDQEAPDS…EEDEDDEDVP (67 aa)) has biased composition (acidic residues). The segment at 149 to 239 (DADDQEAPDS…EEEEDDEDDE (91 aa)) is disordered. A compositionally biased stretch (basic and acidic residues) spans 216–225 (QGEKRKRDLS). Over residues 226-239 (DEGEEEEEDDEDDE) the composition is skewed to acidic residues.

This sequence belongs to the ANP32 family.

It is found in the nucleus. Multifunctional protein working as a cell cycle progression factor as well as a cell survival factor. Required for the progression from the G1 to the S phase. Anti-apoptotic protein which functions as a caspase-3 inhibitor. Has no phosphatase 2A (PP2A) inhibitor activity. Exhibits histone chaperone properties, stimulating core histones to assemble into a nucleosome. In Xenopus laevis (African clawed frog), this protein is Acidic leucine-rich nuclear phosphoprotein 32 family member B (anp32b).